The sequence spans 461 residues: GTPase Der (461 aa).

EngA-type G domains lie at 9 to 171 (KTIA…DLNQ) and 200 to 371 (IQVG…ECFS). GTP-binding positions include 15–22 (GQPNVGKS), 62–66 (DTGGM), 123–126 (NKID), 206–213 (GRVNVGKS), 253–257 (DTAGI), and 317–320 (NKWD). Residues 372–456 (KRIPTSLLNS…PLILNAKDKK (85 aa)) form the KH-like domain.

The protein belongs to the TRAFAC class TrmE-Era-EngA-EngB-Septin-like GTPase superfamily. EngA (Der) GTPase family. As to quaternary structure, associates with the 50S ribosomal subunit.

Its function is as follows. GTPase that plays an essential role in the late steps of ribosome biogenesis. This chain is GTPase Der, found in Helicobacter pylori (strain Shi470).